The chain runs to 89 residues: MIALEIYVSGNVQGVGFRYFTRRVARELGIKGYVKNLPDGRVYIYAVGEELTLDKFLSAVKSGPPLATVRGVEVKKAEIENYESFEVAY.

Residues 3–89 enclose the Acylphosphatase-like domain; the sequence is ALEIYVSGNV…ENYESFEVAY (87 aa). Catalysis depends on residues Arg-18 and Asn-36.

This sequence belongs to the acylphosphatase family.

The enzyme catalyses an acyl phosphate + H2O = a carboxylate + phosphate + H(+). This is Acylphosphatase (acyP) from Archaeoglobus fulgidus (strain ATCC 49558 / DSM 4304 / JCM 9628 / NBRC 100126 / VC-16).